A 603-amino-acid polypeptide reads, in one-letter code: Prostaglandin G/H synthase 1 (603 aa).

Residues 1–27 form the signal peptide; the sequence is MSRGSRLHRWPLLLLLLLLLPPPPVLP. Residues 35 to 73 enclose the EGF-like domain; it reads PVNPCCYYPCQHQGICVRFGLDRYQCDCTRTGYSGPNCT. 4 cysteine pairs are disulfide-bonded: Cys39-Cys50, Cys40-Cys162, Cys44-Cys60, and Cys62-Cys72. N-linked (GlcNAc...) asparagine glycosylation is found at Asn71, Asn107, and Asn147. The Proton acceptor role is filled by His210. Tyr388 acts as the For cyclooxygenase activity in catalysis. A heme b-binding site is contributed by His391. An intrachain disulfide couples Cys572 to Cys578.

Belongs to the prostaglandin G/H synthase family. In terms of assembly, homodimer. Heme b is required as a cofactor. N-glycosylated. N-linked glycosylation is necessary for enzymatic activity. As to expression, brain cortex. Isoform 2 is expressed in the cerebral cortex and heart.

It is found in the microsome membrane. Its subcellular location is the endoplasmic reticulum membrane. It carries out the reaction (5Z,8Z,11Z,14Z)-eicosatetraenoate + AH2 + 2 O2 = prostaglandin H2 + A + H2O. The catalysed reaction is (5Z,8Z,11Z,14Z)-eicosatetraenoate + 2 O2 = prostaglandin G2. The enzyme catalyses prostaglandin G2 + AH2 = prostaglandin H2 + A + H2O. It catalyses the reaction (9Z,12Z)-octadecadienoate + AH2 + O2 = (9R)-hydroxy-(10E,12Z)-octadecadienoate + A + H2O. It carries out the reaction (9Z,12Z)-octadecadienoate + AH2 + O2 = (9S)-hydroxy-(10E,12Z)-octadecadienoate + A + H2O. The catalysed reaction is (9Z,12Z)-octadecadienoate + AH2 + O2 = (13S)-hydroxy-(9Z,11E)-octadecadienoate + A + H2O. The enzyme catalyses (9Z,12Z)-octadecadienoate + AH2 + O2 = (13R)-hydroxy-(9Z,11E)-octadecadienoate + A + H2O. The protein operates within lipid metabolism; prostaglandin biosynthesis. Its activity is regulated as follows. The cyclooxygenase activity is inhibited by nonsteroidal anti-inflammatory drugs (NSAIDs) including ibuprofen, flurbiprofen, ketoprofen, naproxen, flurbiprofen, anirolac, fenclofenac and diclofenac. Dual cyclooxygenase and peroxidase that plays an important role in the biosynthesis pathway of prostanoids, a class of C20 oxylipins mainly derived from arachidonate ((5Z,8Z,11Z,14Z)-eicosatetraenoate, AA, C20:4(n-6)), with a particular role in the inflammatory response. The cyclooxygenase activity oxygenates AA to the hydroperoxy endoperoxide prostaglandin G2 (PGG2), and the peroxidase activity reduces PGG2 to the hydroxy endoperoxide prostaglandin H2 (PGH2), the precursor of all 2-series prostaglandins and thromboxanes. This complex transformation is initiated by abstraction of hydrogen at carbon 13 (with S-stereochemistry), followed by insertion of molecular O2 to form the endoperoxide bridge between carbon 9 and 11 that defines prostaglandins. The insertion of a second molecule of O2 (bis-oxygenase activity) yields a hydroperoxy group in PGG2 that is then reduced to PGH2 by two electrons. Involved in the constitutive production of prostanoids in particular in the stomach and platelets. In gastric epithelial cells, it is a key step in the generation of prostaglandins, such as prostaglandin E2 (PGE2), which plays an important role in cytoprotection. In platelets, it is involved in the generation of thromboxane A2 (TXA2), which promotes platelet activation and aggregation, vasoconstriction and proliferation of vascular smooth muscle cells. Can also use linoleate (LA, (9Z,12Z)-octadecadienoate, C18:2(n-6)) as substrate and produce hydroxyoctadecadienoates (HODEs) in a regio- and stereospecific manner, being (9R)-HODE ((9R)-hydroxy-(10E,12Z)-octadecadienoate) and (13S)-HODE ((13S)-hydroxy-(9Z,11E)-octadecadienoate) its major products. This Canis lupus familiaris (Dog) protein is Prostaglandin G/H synthase 1 (PTGS1).